The primary structure comprises 367 residues: Aminomethyltransferase (367 aa).

Belongs to the GcvT family. As to quaternary structure, the glycine cleavage system is composed of four proteins: P, T, L and H.

The enzyme catalyses N(6)-[(R)-S(8)-aminomethyldihydrolipoyl]-L-lysyl-[protein] + (6S)-5,6,7,8-tetrahydrofolate = N(6)-[(R)-dihydrolipoyl]-L-lysyl-[protein] + (6R)-5,10-methylene-5,6,7,8-tetrahydrofolate + NH4(+). Functionally, the glycine cleavage system catalyzes the degradation of glycine. The chain is Aminomethyltransferase from Mycobacterium leprae (strain Br4923).